Reading from the N-terminus, the 397-residue chain is Phosphoglycerate kinase (397 aa).

Residues 21–23, Arg36, 59–62, Arg119, and Arg156 each bind substrate; these read DFN and HLGR. ATP contacts are provided by residues Lys207, Gly295, Glu326, and 353–356; that span reads GGDS.

This sequence belongs to the phosphoglycerate kinase family. Monomer.

The protein resides in the cytoplasm. The catalysed reaction is (2R)-3-phosphoglycerate + ATP = (2R)-3-phospho-glyceroyl phosphate + ADP. The protein operates within carbohydrate degradation; glycolysis; pyruvate from D-glyceraldehyde 3-phosphate: step 2/5. This is Phosphoglycerate kinase from Enterococcus faecalis (strain ATCC 700802 / V583).